Here is a 428-residue protein sequence, read N- to C-terminus: Palmitoyltransferase pfa4 (428 aa).

The Cytoplasmic portion of the chain corresponds to 1-10; sequence MLCRSFNISQ. Residues 11 to 31 traverse the membrane as a helical segment; the sequence is LAIPFVSVLISFLAYTSQLFF. At 32 to 43 the chain is on the lumenal side; sequence YYFEEAPLRSEE. A helical membrane pass occupies residues 44–61; sequence FWRLNIFAVCIWVCYYRA. At 62–134 the chain is on the cytoplasmic side; the sequence is CTVDPGRIPK…SNCVSHFTYP (73 aa). One can recognise a DHHC domain in the interval 91-141; the sequence is RWCRRCEAFKPPRAHHCKTCQRCIPKMDHHCPWTSNCVSHFTYPHFMRFLF. Cys121 (S-palmitoyl cysteine intermediate) is an active-site residue. Residues 135 to 155 form a helical membrane-spanning segment; the sequence is HFMRFLFYAVVGMGYLETLLF. The Lumenal portion of the chain corresponds to 156–177; the sequence is ERASIVWASRHLPSYLGPGLGQ. Residues 178–198 form a helical membrane-spanning segment; it reads LVHLFILLVVNSLTWLALFIL. At 199–428 the chain is on the cytoplasmic side; sequence LLRSIWSLAL…GILMQRRRQQ (230 aa). Positions 339–400 are disordered; the sequence is QRSNDASHSG…WKNSEGDRLR (62 aa). Over residues 360–373 the composition is skewed to basic and acidic residues; that stretch reads DRFNENKAKERLSE. A compositionally biased stretch (acidic residues) spans 374-388; sequence SESDFSDDEEVQDGE. The segment covering 389–400 has biased composition (basic and acidic residues); it reads EGWKNSEGDRLR.

The protein belongs to the DHHC palmitoyltransferase family. PFA4 subfamily.

The protein localises to the endoplasmic reticulum membrane. It catalyses the reaction L-cysteinyl-[protein] + hexadecanoyl-CoA = S-hexadecanoyl-L-cysteinyl-[protein] + CoA. Its function is as follows. Mediates the reversible addition of palmitate to target proteins, thereby regulating their membrane association and biological function. This is Palmitoyltransferase pfa4 from Aspergillus fumigatus (strain ATCC MYA-4609 / CBS 101355 / FGSC A1100 / Af293) (Neosartorya fumigata).